We begin with the raw amino-acid sequence, 71 residues long: IRCFITPRVSSQACPDGHVCYTKTWCDNFCGINGKRVDLGCAATCPTVKPGVDIKCCSTDNCNPFPTRKRP.

Cystine bridges form between Cys3–Cys20, Cys14–Cys41, Cys26–Cys30, Cys45–Cys56, and Cys57–Cys62.

It belongs to the three-finger toxin family. Long-chain subfamily. Type II alpha-neurotoxin sub-subfamily. In terms of tissue distribution, expressed by the venom gland.

It is found in the secreted. Functionally, binds with high affinity to muscular (alpha-1/CHRNA1) and neuronal (alpha-7/CHRNA7) nicotinic acetylcholine receptor (nAChR) and hinders acetylcholine binding to the receptor, thereby impairing neuromuscular and neuronal transmission. This chain is Long neurotoxin 1, found in Naja annulata annulata (Banded water cobra).